We begin with the raw amino-acid sequence, 315 residues long: DNA-directed RNA polymerase subunit alpha (315 aa).

The interval 1-229 (MLDSKLKAPV…EHLTYFSNPQ (229 aa)) is alpha N-terminal domain (alpha-NTD). The interval 247–315 (EQEEELDLPL…LEKKGFTLKE (69 aa)) is alpha C-terminal domain (alpha-CTD).

It belongs to the RNA polymerase alpha chain family. As to quaternary structure, homodimer. The RNAP catalytic core consists of 2 alpha, 1 beta, 1 beta' and 1 omega subunit. When a sigma factor is associated with the core the holoenzyme is formed, which can initiate transcription.

The catalysed reaction is RNA(n) + a ribonucleoside 5'-triphosphate = RNA(n+1) + diphosphate. Functionally, DNA-dependent RNA polymerase catalyzes the transcription of DNA into RNA using the four ribonucleoside triphosphates as substrates. The polypeptide is DNA-directed RNA polymerase subunit alpha (Thermus thermophilus (strain ATCC BAA-163 / DSM 7039 / HB27)).